Here is a 233-residue protein sequence, read N- to C-terminus: Thymidylate kinase (233 aa).

Residue 10 to 17 (GVDGVGKT) participates in ATP binding.

Belongs to the thymidylate kinase family.

It carries out the reaction dTMP + ATP = dTDP + ADP. Phosphorylation of dTMP to form dTDP in both de novo and salvage pathways of dTTP synthesis. The sequence is that of Thymidylate kinase from Bifidobacterium longum subsp. infantis (strain ATCC 15697 / DSM 20088 / JCM 1222 / NCTC 11817 / S12).